The primary structure comprises 167 residues: Small heat shock protein C1 (167 aa).

The region spanning P59 to N167 is the sHSP domain.

Belongs to the small heat shock protein (HSP20) family.

The protein is Small heat shock protein C1 (hspC1) of Rickettsia felis (strain ATCC VR-1525 / URRWXCal2) (Rickettsia azadi).